The following is a 609-amino-acid chain: UvrABC system protein C (609 aa).

Residues 16–94 enclose the GIY-YIG domain; sequence SSAGVYRMYD…IKQYMPKYNV (79 aa). Residues 203–238 enclose the UVR domain; it reads KQVISELVAKMEEAAEQQAYEQAARFRDQIMALRRV.

It belongs to the UvrC family. Interacts with UvrB in an incision complex.

The protein localises to the cytoplasm. Functionally, the UvrABC repair system catalyzes the recognition and processing of DNA lesions. UvrC both incises the 5' and 3' sides of the lesion. The N-terminal half is responsible for the 3' incision and the C-terminal half is responsible for the 5' incision. The protein is UvrABC system protein C of Shewanella sp. (strain MR-4).